Consider the following 339-residue polypeptide: MYQLFRHGIFQMDAEKAHNFTIQCLKLAGNPLFKPILKSIIHAPKGFPKMVMGVNFPNPIGLAAGADKNGDAIDGFGALGFGFLELGTVTPVAQDGNAKPRQFRLIEAEGIINRNGFNNNGIDYLIENVKNARYKGVIGINIGKNKFTPLEQGKDDYIFCLNKAYNYAGYITVNISSPNTPDLRQLQYGDYFDDLLRSIKDRQTILANQYNKYVPIAVKIAPDLTESELVQIADTLVRHKMDGVIATNTTISRDTVMGMKNAEQQGGLSGKPLQHKSTEIIKRLHQELKGQIPIIGSGGIDGLQNAQEKIEAGAELLQVYSGLIYHGPKLVKELVKNIK.

Residues 64–68 and Thr88 contribute to the FMN site; that span reads AGADK. Lys68 contacts substrate. Residue 113-117 coordinates substrate; that stretch reads NRNGF. Residues Asn141 and Asn174 each contribute to the FMN site. Residue Asn174 coordinates substrate. Ser177 acts as the Nucleophile in catalysis. Asn179 provides a ligand contact to substrate. FMN-binding residues include Lys219 and Thr247. Substrate is bound at residue 248–249; that stretch reads NT. FMN is bound by residues Gly270, Gly299, and 320 to 321; that span reads YS.

Belongs to the dihydroorotate dehydrogenase family. Type 2 subfamily. Monomer. It depends on FMN as a cofactor.

Its subcellular location is the cell membrane. The enzyme catalyses (S)-dihydroorotate + a quinone = orotate + a quinol. The protein operates within pyrimidine metabolism; UMP biosynthesis via de novo pathway; orotate from (S)-dihydroorotate (quinone route): step 1/1. Catalyzes the conversion of dihydroorotate to orotate with quinone as electron acceptor. This chain is Dihydroorotate dehydrogenase (quinone), found in Haemophilus influenzae (strain PittEE).